The sequence spans 288 residues: Heme oxygenase 1 (288 aa).

Topologically, residues Met-1 to Ala-265 are cytoplasmic. Heme b-binding residues include Lys-18, His-25, Tyr-134, and Arg-183. The disordered stretch occupies residues His-223–Asn-260. Ser-229 carries the phosphoserine modification. The chain crosses the membrane as a helical; Anchor for type IV membrane protein span at residues Pro-266 to Met-288.

It belongs to the heme oxygenase family. As to quaternary structure, homodimer and higher order homooligomer. Oligomerization is crucial for its stability and function in the endoplasmic reticulum. Interacts with FLVCR2; this interaction is potentiated in the presence of heme. A soluble form arises by proteolytic removal of the membrane anchor.

Its subcellular location is the endoplasmic reticulum membrane. The enzyme catalyses heme b + 3 reduced [NADPH--hemoprotein reductase] + 3 O2 = biliverdin IXalpha + CO + Fe(2+) + 3 oxidized [NADPH--hemoprotein reductase] + 3 H2O + H(+). Its function is as follows. Catalyzes the oxidative cleavage of heme at the alpha-methene bridge carbon, released as carbon monoxide (CO), to generate biliverdin IXalpha, while releasing the central heme iron chelate as ferrous iron. Affords protection against programmed cell death and this cytoprotective effect relies on its ability to catabolize free heme and prevent it from sensitizing cells to undergo apoptosis. Functionally, catalyzes the oxidative cleavage of heme at the alpha-methene bridge carbon, released as carbon monoxide (CO), to generate biliverdin IXalpha, while releasing the central heme iron chelate as ferrous iron. The chain is Heme oxygenase 1 (HMOX1) from Pongo abelii (Sumatran orangutan).